Reading from the N-terminus, the 502-residue chain is Probable glycine dehydrogenase (decarboxylating) subunit 2 (502 aa).

Position 273 is an N6-(pyridoxal phosphate)lysine (lysine 273).

Belongs to the GcvP family. C-terminal subunit subfamily. The glycine cleavage system is composed of four proteins: P, T, L and H. In this organism, the P 'protein' is a heterodimer of two subunits. Pyridoxal 5'-phosphate serves as cofactor.

It catalyses the reaction N(6)-[(R)-lipoyl]-L-lysyl-[glycine-cleavage complex H protein] + glycine + H(+) = N(6)-[(R)-S(8)-aminomethyldihydrolipoyl]-L-lysyl-[glycine-cleavage complex H protein] + CO2. In terms of biological role, the glycine cleavage system catalyzes the degradation of glycine. The P protein binds the alpha-amino group of glycine through its pyridoxal phosphate cofactor; CO(2) is released and the remaining methylamine moiety is then transferred to the lipoamide cofactor of the H protein. The protein is Probable glycine dehydrogenase (decarboxylating) subunit 2 of Pyrococcus abyssi (strain GE5 / Orsay).